We begin with the raw amino-acid sequence, 172 residues long: Large ribosomal subunit protein uL10 (172 aa).

This sequence belongs to the universal ribosomal protein uL10 family. In terms of assembly, part of the ribosomal stalk of the 50S ribosomal subunit. The N-terminus interacts with L11 and the large rRNA to form the base of the stalk. The C-terminus forms an elongated spine to which L12 dimers bind in a sequential fashion forming a multimeric L10(L12)X complex.

Forms part of the ribosomal stalk, playing a central role in the interaction of the ribosome with GTP-bound translation factors. The chain is Large ribosomal subunit protein uL10 from Macrococcus caseolyticus (strain JCSC5402) (Macrococcoides caseolyticum).